The sequence spans 287 residues: 4-hydroxybenzoate octaprenyltransferase (287 aa).

The next 6 membrane-spanning stretches (helical) occupy residues 41-61 (WPLI…GCAM), 89-109 (WEAV…ILPL), 133-153 (FFAI…PMAF), 158-178 (NTVP…SIAY), 218-238 (LGIY…WVGW), and 267-287 (NNWL…MAGS).

Belongs to the UbiA prenyltransferase family. It depends on Mg(2+) as a cofactor.

Its subcellular location is the cell inner membrane. It catalyses the reaction all-trans-octaprenyl diphosphate + 4-hydroxybenzoate = 4-hydroxy-3-(all-trans-octaprenyl)benzoate + diphosphate. It participates in cofactor biosynthesis; ubiquinone biosynthesis. Catalyzes the prenylation of para-hydroxybenzoate (PHB) with an all-trans polyprenyl group. Mediates the second step in the final reaction sequence of ubiquinone-8 (UQ-8) biosynthesis, which is the condensation of the polyisoprenoid side chain with PHB, generating the first membrane-bound Q intermediate 3-octaprenyl-4-hydroxybenzoate. In Burkholderia multivorans (strain ATCC 17616 / 249), this protein is 4-hydroxybenzoate octaprenyltransferase.